The chain runs to 516 residues: GMP synthase [glutamine-hydrolyzing] (516 aa).

The Glutamine amidotransferase type-1 domain occupies 8–198 (KILILDFGSQ…VVNICGCDTL (191 aa)). Catalysis depends on Cys-84, which acts as the Nucleophile. Catalysis depends on residues His-172 and Glu-174. Residues 199–391 (WNIENIIEND…LGLPYNMLYR (193 aa)) enclose the GMPS ATP-PPase domain. 226 to 232 (SGGVDSS) provides a ligand contact to ATP.

As to quaternary structure, homodimer.

It carries out the reaction XMP + L-glutamine + ATP + H2O = GMP + L-glutamate + AMP + diphosphate + 2 H(+). Its pathway is purine metabolism; GMP biosynthesis; GMP from XMP (L-Gln route): step 1/1. Functionally, catalyzes the synthesis of GMP from XMP. The protein is GMP synthase [glutamine-hydrolyzing] of Francisella tularensis subsp. tularensis (strain WY96-3418).